The primary structure comprises 216 residues: MAVTFSDLHTADGLKALEAHLAGKTYISGDGITKDDVKVFAAVPLKPSAEFPNAARWYDTVAAAVSSRFPGQASGVSASSAPAAAAPAASKDEDDDDDMDLFGDETEEDKKAAAEREAAKPAKKKESGKSSVLMDIKPWDDETDMKKLEEAVRSVQMEGLTWGASKLMPVGYGIKKLQIMLTIIDDLASTPIEEVLCEAPINEYVQSCDIVAFNKI.

The interval 71 to 131 (GQASGVSASS…AKKKESGKSS (61 aa)) is disordered. Positions 73–89 (ASGVSASSAPAAAAPAA) are enriched in low complexity. Positions 92-107 (DEDDDDDMDLFGDETE) are enriched in acidic residues. Residues 108 to 128 (EDKKAAAEREAAKPAKKKESG) show a composition bias toward basic and acidic residues.

This sequence belongs to the EF-1-beta/EF-1-delta family. In terms of assembly, EF-1 is composed of 4 subunits: alpha, beta (1B-alpha=beta'), delta (1B-beta), and gamma (1B-gamma).

EF-1-beta and EF-1-beta' stimulate the exchange of GDP bound to EF-1-alpha to GTP. This chain is Elongation factor 1-beta, found in Triticum aestivum (Wheat).